The following is a 457-amino-acid chain: Phosphoglucosamine mutase (457 aa).

Residue serine 105 is the Phosphoserine intermediate of the active site. Residues serine 105, aspartate 247, aspartate 249, and aspartate 251 each coordinate Mg(2+). A Phosphoserine modification is found at serine 105.

Belongs to the phosphohexose mutase family. Mg(2+) serves as cofactor. In terms of processing, activated by phosphorylation.

The catalysed reaction is alpha-D-glucosamine 1-phosphate = D-glucosamine 6-phosphate. Functionally, catalyzes the conversion of glucosamine-6-phosphate to glucosamine-1-phosphate. This Protochlamydia amoebophila (strain UWE25) protein is Phosphoglucosamine mutase.